The primary structure comprises 253 residues: Hydroxyacylglutathione hydrolase (253 aa).

The Zn(2+) site is built by His54, His56, Asp58, His59, His112, Asp131, and His169.

It belongs to the metallo-beta-lactamase superfamily. Glyoxalase II family. Monomer. The cofactor is Zn(2+).

The enzyme catalyses an S-(2-hydroxyacyl)glutathione + H2O = a 2-hydroxy carboxylate + glutathione + H(+). It functions in the pathway secondary metabolite metabolism; methylglyoxal degradation; (R)-lactate from methylglyoxal: step 2/2. Thiolesterase that catalyzes the hydrolysis of S-D-lactoyl-glutathione to form glutathione and D-lactic acid. This is Hydroxyacylglutathione hydrolase from Bartonella tribocorum (strain CIP 105476 / IBS 506).